The primary structure comprises 246 residues: tRNA (guanine-N(1)-)-methyltransferase (246 aa).

S-adenosyl-L-methionine is bound by residues G114 and 134 to 139 (IGDYIL).

Belongs to the RNA methyltransferase TrmD family. In terms of assembly, homodimer.

The protein localises to the cytoplasm. It carries out the reaction guanosine(37) in tRNA + S-adenosyl-L-methionine = N(1)-methylguanosine(37) in tRNA + S-adenosyl-L-homocysteine + H(+). In terms of biological role, specifically methylates guanosine-37 in various tRNAs. This Coxiella burnetii (strain RSA 331 / Henzerling II) protein is tRNA (guanine-N(1)-)-methyltransferase.